Here is a 28-residue protein sequence, read N- to C-terminus: Arylalkyl acylamidase (28 aa).

In terms of assembly, homotetramer.

It carries out the reaction an N-acetylarylalkylamine + H2O = an aralkylamine + acetate. Activated by divalent metal ions. Inhibited by certain thiol reagents. In terms of biological role, shows a strict specificity for N-acetyl arylalkylamines but not acetanilide derivatives. The sequence is that of Arylalkyl acylamidase from Pseudomonas putida (Arthrobacter siderocapsulatus).